The following is a 219-amino-acid chain: Protein-L-isoaspartate O-methyltransferase (219 aa).

Ser60 is an active-site residue.

This sequence belongs to the methyltransferase superfamily. L-isoaspartyl/D-aspartyl protein methyltransferase family.

Its subcellular location is the cytoplasm. The enzyme catalyses [protein]-L-isoaspartate + S-adenosyl-L-methionine = [protein]-L-isoaspartate alpha-methyl ester + S-adenosyl-L-homocysteine. Its function is as follows. Catalyzes the methyl esterification of L-isoaspartyl residues in peptides and proteins that result from spontaneous decomposition of normal L-aspartyl and L-asparaginyl residues. It plays a role in the repair and/or degradation of damaged proteins. The sequence is that of Protein-L-isoaspartate O-methyltransferase from Rhodospirillum rubrum (strain ATCC 11170 / ATH 1.1.1 / DSM 467 / LMG 4362 / NCIMB 8255 / S1).